Consider the following 396-residue polypeptide: Elongation factor Tu (396 aa).

The tr-type G domain occupies 11 to 205; it reads KPHVNIGTIG…VVDEYIPTPE (195 aa). The segment at 20–27 is G1; that stretch reads GHVDHGKT. 20 to 27 is a GTP binding site; it reads GHVDHGKT. Residue Thr27 participates in Mg(2+) binding. The interval 61 to 65 is G2; it reads GITIN. The segment at 82 to 85 is G3; that stretch reads DAPG. GTP-binding positions include 82-86 and 137-140; these read DAPGH and NKCD. The G4 stretch occupies residues 137–140; that stretch reads NKCD. The tract at residues 175 to 177 is G5; it reads SAL.

It belongs to the TRAFAC class translation factor GTPase superfamily. Classic translation factor GTPase family. EF-Tu/EF-1A subfamily. Monomer.

Its subcellular location is the cytoplasm. The enzyme catalyses GTP + H2O = GDP + phosphate + H(+). GTP hydrolase that promotes the GTP-dependent binding of aminoacyl-tRNA to the A-site of ribosomes during protein biosynthesis. The protein is Elongation factor Tu of Lactobacillus delbrueckii subsp. bulgaricus (strain ATCC 11842 / DSM 20081 / BCRC 10696 / JCM 1002 / NBRC 13953 / NCIMB 11778 / NCTC 12712 / WDCM 00102 / Lb 14).